The sequence spans 479 residues: Bifunctional NAD(P)H-hydrate repair enzyme Nnr (479 aa).

Residues 1-214 (MTVIIQGRSF…GIGIPLLAEI (214 aa)) are NAD(P)H-hydrate epimerase. A YjeF N-terminal domain is found at 31-214 (MRRIDQNAQA…GIGIPLLAEI (184 aa)). Positions 76 to 80 (NNGGD) are NADPHX 1; for epimerase activity. 2 residues coordinate K(+): Asn-77 and Asp-146. Positions 150 to 156 (GTGGTGS) are NADPHX 1; for epimerase activity. Asp-179 is a (6S)-NADPHX binding site. Ser-182 is a K(+) binding site. Residues 216–474 (TGPGDLLILR…TAVPQVLFRS (259 aa)) enclose the YjeF C-terminal domain. An ADP-dependent (S)-NAD(P)H-hydrate dehydratase region spans residues 216–479 (TGPGDLLILR…VLFRSTSERE (264 aa)). Residue Gly-312 coordinates (6S)-NADPHX. Positions 353–359 (HAGEFAR) are NADPHX 2; for dehydratase activity. ADP contacts are provided by residues 388 to 392 (KGAVD) and 407 to 416 (TPAMTTGGTG). Asp-417 is a binding site for (6S)-NADPHX.

In the N-terminal section; belongs to the NnrE/AIBP family. The protein in the C-terminal section; belongs to the NnrD/CARKD family. Requires K(+) as cofactor.

It carries out the reaction (6S)-NADHX + ADP = AMP + phosphate + NADH + H(+). The enzyme catalyses (6S)-NADPHX + ADP = AMP + phosphate + NADPH + H(+). The catalysed reaction is (6R)-NADHX = (6S)-NADHX. It catalyses the reaction (6R)-NADPHX = (6S)-NADPHX. Bifunctional enzyme that catalyzes the epimerization of the S- and R-forms of NAD(P)HX and the dehydration of the S-form of NAD(P)HX at the expense of ADP, which is converted to AMP. This allows the repair of both epimers of NAD(P)HX, a damaged form of NAD(P)H that is a result of enzymatic or heat-dependent hydration. The sequence is that of Bifunctional NAD(P)H-hydrate repair enzyme Nnr (nnr) from Methanospirillum hungatei JF-1 (strain ATCC 27890 / DSM 864 / NBRC 100397 / JF-1).